Reading from the N-terminus, the 257-residue chain is MADS-box transcription factor 1 (257 aa).

Residues 1-61 enclose the MADS-box domain; the sequence is MGRGKVELKR…GRLFEFSSSS (61 aa). Residues 85 to 175 form the K-box domain; sequence NEINYQEYLK…RKKLQETSAE (91 aa).

As to quaternary structure, may interact with the K-box of MADS6, MADS14 and MADS15.

The protein resides in the nucleus. Functionally, probable transcription factor involved in the development of floral organs. Required for the formation of inner floral organs (lodicules, stamens and carpels, or whorls 2, 3 and 4) and the lemma and palea (whorl 1), which are grass floral organs analogous to sepals. May be involved in the control of flowering time. Seems to act as transcriptional activator. May act upstream of the auxin-responsive protein GH3.8. The polypeptide is MADS-box transcription factor 1 (MADS1) (Oryza sativa subsp. indica (Rice)).